Consider the following 361-residue polypeptide: Probable purine permease 5 (361 aa).

Transmembrane regions (helical) follow at residues 37-57 (WILLFFSGAAMLIAFPASSLL), 70-90 (WIISWVAVAGWPITCLILLPT), 105-125 (LVLSYVVLGFLSAADNLMYAY), 134-154 (TSSLLASSSLAFSALFGYLIV), 158-178 (LNASVINSIVVITGAMAIIAL), 193-213 (YFAGFFWDIMGSALHGLIFAL), 235-255 (VMVSLTAFAFTTIGMVVSNDF), 285-305 (LGVLGATAVLFLASTVMAGVL), and 315-335 (VAAVILMHDPMSGFKILSLVL). Residues 75–178 (VAVAGWPITC…ITGAMAIIAL (104 aa)) form the EamA domain.

The protein belongs to the purine permeases (TC 2.A.7.14) family.

Its subcellular location is the membrane. This Arabidopsis thaliana (Mouse-ear cress) protein is Probable purine permease 5 (PUP5).